Reading from the N-terminus, the 697-residue chain is Elongation factor G 2 (697 aa).

Residues 5–280 (SKYRNIGIFA…AVVDYLPAPD (276 aa)) enclose the tr-type G domain. GTP contacts are provided by residues 14–21 (AHVDAGKT), 78–82 (DTPGH), and 132–135 (NKLD).

The protein belongs to the TRAFAC class translation factor GTPase superfamily. Classic translation factor GTPase family. EF-G/EF-2 subfamily.

It localises to the cytoplasm. Functionally, catalyzes the GTP-dependent ribosomal translocation step during translation elongation. During this step, the ribosome changes from the pre-translocational (PRE) to the post-translocational (POST) state as the newly formed A-site-bound peptidyl-tRNA and P-site-bound deacylated tRNA move to the P and E sites, respectively. Catalyzes the coordinated movement of the two tRNA molecules, the mRNA and conformational changes in the ribosome. The chain is Elongation factor G 2 from Shewanella sp. (strain MR-7).